The primary structure comprises 129 residues: Small ribosomal subunit protein uS11 (129 aa).

Belongs to the universal ribosomal protein uS11 family. Part of the 30S ribosomal subunit. Interacts with proteins S7 and S18. Binds to IF-3.

Located on the platform of the 30S subunit, it bridges several disparate RNA helices of the 16S rRNA. Forms part of the Shine-Dalgarno cleft in the 70S ribosome. This Methylobacillus flagellatus (strain ATCC 51484 / DSM 6875 / VKM B-1610 / KT) protein is Small ribosomal subunit protein uS11.